Consider the following 398-residue polypeptide: Stearoyl-[acyl-carrier-protein] 9-desaturase, chloroplastic (398 aa).

A chloroplast-targeting transit peptide spans 1–34; that stretch reads MALKLHHTAFNPSMAVTSSGLPRSYHLRSHRVFM. The tract at residues 46–66 is disordered; sequence IPNAKKPHMPPREAHVQKTHS. Glutamate 140, glutamate 178, histidine 181, glutamate 231, glutamate 264, and histidine 267 together coordinate Fe cation.

Belongs to the fatty acid desaturase type 2 family. As to quaternary structure, homodimer. Fe(2+) is required as a cofactor.

It localises to the plastid. It is found in the chloroplast. The enzyme catalyses octadecanoyl-[ACP] + 2 reduced [2Fe-2S]-[ferredoxin] + O2 + 2 H(+) = (9Z)-octadecenoyl-[ACP] + 2 oxidized [2Fe-2S]-[ferredoxin] + 2 H2O. Its pathway is lipid metabolism; fatty acid metabolism. Its function is as follows. Converts stearoyl-ACP to oleoyl-ACP by introduction of a cis double bond between carbons 9 and 10 of the acyl chain. The chain is Stearoyl-[acyl-carrier-protein] 9-desaturase, chloroplastic from Simmondsia chinensis (Jojoba).